A 302-amino-acid polypeptide reads, in one-letter code: tRNA dimethylallyltransferase (302 aa).

ATP is bound at residue 9–16 (GATATGKS). Residue 11–16 (TATGKS) participates in substrate binding. The interaction with substrate tRNA stretch occupies residues 34 to 37 (DSRQ).

The protein belongs to the IPP transferase family. As to quaternary structure, monomer. Mg(2+) serves as cofactor.

The enzyme catalyses adenosine(37) in tRNA + dimethylallyl diphosphate = N(6)-dimethylallyladenosine(37) in tRNA + diphosphate. In terms of biological role, catalyzes the transfer of a dimethylallyl group onto the adenine at position 37 in tRNAs that read codons beginning with uridine, leading to the formation of N6-(dimethylallyl)adenosine (i(6)A). The chain is tRNA dimethylallyltransferase from Nostoc punctiforme (strain ATCC 29133 / PCC 73102).